We begin with the raw amino-acid sequence, 429 residues long: Protein FAM98B (429 aa).

The tract at residues 304 to 429 is disordered; it reads RVPDRGGRPN…GGGGGGYRRY (126 aa). Residues 305–314 are compositionally biased toward basic and acidic residues; it reads VPDRGGRPNE. The span at 332–429 shows a compositional bias: gly residues; it reads GGRGGWGGGG…GGGGGGYRRY (98 aa).

It belongs to the FAM98 family. In terms of assembly, homodimer. Component of a tRNA-splicing ligase complex. Interacts with FAM98A.

The protein localises to the nucleus. Its subcellular location is the cytoplasm. Functionally, positively stimulates PRMT1-induced protein arginine dimethylated arginine methylation. The protein is Protein FAM98B (Fam98b) of Mus musculus (Mouse).